Consider the following 324-residue polypeptide: tRNA dimethylallyltransferase (324 aa).

Residue 15 to 22 (GPTATGKS) coordinates ATP. 17 to 22 (TATGKS) provides a ligand contact to substrate. The interval 40 to 43 (DSAQ) is interaction with substrate tRNA.

This sequence belongs to the IPP transferase family. In terms of assembly, monomer. Mg(2+) is required as a cofactor.

The enzyme catalyses adenosine(37) in tRNA + dimethylallyl diphosphate = N(6)-dimethylallyladenosine(37) in tRNA + diphosphate. Functionally, catalyzes the transfer of a dimethylallyl group onto the adenine at position 37 in tRNAs that read codons beginning with uridine, leading to the formation of N6-(dimethylallyl)adenosine (i(6)A). The sequence is that of tRNA dimethylallyltransferase from Moorella thermoacetica (strain ATCC 39073 / JCM 9320).